The following is a 290-amino-acid chain: Phosphate import ATP-binding protein PstB (290 aa).

The ABC transporter domain occupies 43–285; the sequence is MSVRNLNVYY…PEHELTEAYI (243 aa). ATP is bound at residue 75-82; sequence GPSGCGKS.

It belongs to the ABC transporter superfamily. Phosphate importer (TC 3.A.1.7) family. In terms of assembly, the complex is composed of two ATP-binding proteins (PstB), two transmembrane proteins (PstC and PstA) and a solute-binding protein (PstS).

The protein resides in the cell inner membrane. It catalyses the reaction phosphate(out) + ATP + H2O = ADP + 2 phosphate(in) + H(+). Its function is as follows. Part of the ABC transporter complex PstSACB involved in phosphate import. Responsible for energy coupling to the transport system. The chain is Phosphate import ATP-binding protein PstB from Pseudoalteromonas atlantica (strain T6c / ATCC BAA-1087).